The sequence spans 169 residues: Large ribosomal subunit protein uL10 (169 aa).

It belongs to the universal ribosomal protein uL10 family. As to quaternary structure, part of the ribosomal stalk of the 50S ribosomal subunit. The N-terminus interacts with L11 and the large rRNA to form the base of the stalk. The C-terminus forms an elongated spine to which L12 dimers bind in a sequential fashion forming a multimeric L10(L12)X complex.

Its function is as follows. Forms part of the ribosomal stalk, playing a central role in the interaction of the ribosome with GTP-bound translation factors. This chain is Large ribosomal subunit protein uL10, found in Rickettsia massiliae (strain Mtu5).